Consider the following 89-residue polypeptide: Small ribosomal subunit protein uS15 (89 aa).

Belongs to the universal ribosomal protein uS15 family. In terms of assembly, part of the 30S ribosomal subunit. Forms a bridge to the 50S subunit in the 70S ribosome, contacting the 23S rRNA.

One of the primary rRNA binding proteins, it binds directly to 16S rRNA where it helps nucleate assembly of the platform of the 30S subunit by binding and bridging several RNA helices of the 16S rRNA. Functionally, forms an intersubunit bridge (bridge B4) with the 23S rRNA of the 50S subunit in the ribosome. The sequence is that of Small ribosomal subunit protein uS15 from Leuconostoc citreum (strain KM20).